A 317-amino-acid polypeptide reads, in one-letter code: Ribonuclease Z (317 aa).

Residues His-62, His-64, Asp-66, His-67, His-139, Asp-210, and His-268 each coordinate Zn(2+). Residue Asp-66 is the Proton acceptor of the active site.

Belongs to the RNase Z family. As to quaternary structure, homodimer. Zn(2+) is required as a cofactor.

It carries out the reaction Endonucleolytic cleavage of RNA, removing extra 3' nucleotides from tRNA precursor, generating 3' termini of tRNAs. A 3'-hydroxy group is left at the tRNA terminus and a 5'-phosphoryl group is left at the trailer molecule.. Zinc phosphodiesterase, which displays some tRNA 3'-processing endonuclease activity. Probably involved in tRNA maturation, by removing a 3'-trailer from precursor tRNA. The polypeptide is Ribonuclease Z (Picosynechococcus sp. (strain ATCC 27264 / PCC 7002 / PR-6) (Agmenellum quadruplicatum)).